The following is a 156-amino-acid chain: Endogenous retrovirus group K member 8 Pro protein (156 aa).

Positions phenylalanine 21 to leucine 96 constitute a Peptidase A2 domain. Aspartate 26 is an active-site residue. In terms of domain architecture, G-patch spans tyrosine 111–phenylalanine 156.

It belongs to the peptidase A2 family. HERV class-II K(HML-2) subfamily. Active as a homodimer. In terms of processing, autoproteolytically processed at the N-terminus. Expected C-terminal autoprocessing not detected. The sequence shown is that of the processed Pro protein.

The enzyme catalyses Processing at the authentic HIV-1 PR recognition site and release of the mature p17 matrix and the p24 capsid protein, as a result of the cleavage of the -SQNY-|-PIVQ- cleavage site.. Its function is as follows. Retroviral proteases have roles in the processing of the primary translation products and the maturation of the viral particle. Endogenous Pro proteins may have kept, lost or modified their original function during evolution. The sequence is that of Endogenous retrovirus group K member 8 Pro protein (ERVK-8) from Homo sapiens (Human).